Consider the following 88-residue polypeptide: Phosphocarrier protein HPr (88 aa).

Positions 1–88 (MKTQQFTVID…TLLTEMGLAQ (88 aa)) constitute an HPr domain. The Pros-phosphohistidine intermediate role is filled by His15. The residue at position 46 (Ser46) is a Phosphoserine; by HPrK/P.

Belongs to the HPr family.

It is found in the cytoplasm. Its activity is regulated as follows. Phosphorylation on Ser-46 inhibits the phosphoryl transfer from enzyme I to HPr. Functionally, general (non sugar-specific) component of the phosphoenolpyruvate-dependent sugar phosphotransferase system (sugar PTS). This major carbohydrate active-transport system catalyzes the phosphorylation of incoming sugar substrates concomitantly with their translocation across the cell membrane. The phosphoryl group from phosphoenolpyruvate (PEP) is transferred to the phosphoryl carrier protein HPr by enzyme I. Phospho-HPr then transfers it to the PTS EIIA domain. P-Ser-HPr interacts with the catabolite control protein A (CcpA), forming a complex that binds to DNA at the catabolite response elements cre, operator sites preceding a large number of catabolite-regulated genes. Thus, P-Ser-HPr is a corepressor in carbon catabolite repression (CCR), a mechanism that allows bacteria to coordinate and optimize the utilization of available carbon sources. P-Ser-HPr also plays a role in inducer exclusion, in which it probably interacts with several non-PTS permeases and inhibits their transport activity. The sequence is that of Phosphocarrier protein HPr (ptsH) from Lysinibacillus sphaericus (Bacillus sphaericus).